Here is a 56-residue protein sequence, read N- to C-terminus: Photosystem II assembly protein Psb34 (56 aa).

Residues Met1–Arg33 are Cytoplasmic-facing. Residues Ala34 to Gly54 traverse the membrane as a helical segment. Residues Val55–Ser56 are Extracellular-facing.

In terms of assembly, part of photosystem II (PSII) assembly intermediate complex PSII-I; crystallized from a strain without psbJ, it forms monomeric PSII before addition of the oxygen evolving complex. PSII-I includes 3 assembly factors not found in mature PSII (Psb27, Psb28 and Psb34). The N-terminus of Psb34 (this protein) binds to CP47 (psbB) in close proximity to PsbH on the cytoplasmic face of PSII.

The protein resides in the cellular thylakoid membrane. Involved in photosystem II (PSII) assembly and/or repair, probably in conversion of late PSII assembly intermediates into mature dimeric PSII. The chain is Photosystem II assembly protein Psb34 from Thermosynechococcus vestitus (strain NIES-2133 / IAM M-273 / BP-1).